A 103-amino-acid polypeptide reads, in one-letter code: Large ribosomal subunit protein uL22c (103 aa).

It belongs to the universal ribosomal protein uL22 family. As to quaternary structure, part of the 50S ribosomal subunit.

The protein localises to the plastid. Its subcellular location is the chloroplast. Functionally, this protein binds specifically to 23S rRNA. The globular domain of the protein is located near the polypeptide exit tunnel on the outside of the subunit, while an extended beta-hairpin is found that lines the wall of the exit tunnel in the center of the 70S ribosome. This is Large ribosomal subunit protein uL22c (rpl22) from Cyanidium caldarium (Red alga).